A 966-amino-acid polypeptide reads, in one-letter code: Catenin alpha-2 (966 aa).

A compositionally biased stretch (basic and acidic residues) spans 924-940 (PEKKPLVKREKPEEYQT). Positions 924 to 952 (PEKKPLVKREKPEEYQTRVRRGSQKKHIS) are disordered. The segment covering 941–951 (RVRRGSQKKHI) has biased composition (basic residues).

The protein belongs to the vinculin/alpha-catenin family.

The protein localises to the cell membrane. The protein resides in the cytoplasm. Its subcellular location is the cytoskeleton. It is found in the cell junction. It localises to the adherens junction. The protein localises to the cell projection. The protein resides in the axon. Its subcellular location is the nucleus. Its function is as follows. May function as a linker between cadherin adhesion receptors and the cytoskeleton to regulate cell-cell adhesion and differentiation in the nervous system. This Xenopus laevis (African clawed frog) protein is Catenin alpha-2 (ctnna2).